The sequence spans 131 residues: Replicase polyprotein 1ab (131 aa).

Positions 1–128 constitute a Nidovirus-type SAM-dependent 2'-O-MTase domain; the sequence is ITEFSWNKYL…KLLNFGNHFI (128 aa).

The replicase polyprotein of coronaviruses is a multifunctional protein: it contains the activities necessary for the transcription of negative stranded RNA, leader RNA, subgenomic mRNAs and progeny virion RNA as well as proteinases responsible for the cleavage of the polyprotein into functional products. The protein is Replicase polyprotein 1ab (rep) of Sus scrofa (Pig).